The following is a 265-amino-acid chain: Exosome complex component Rrp4 (265 aa).

The 73-residue stretch at 65 to 137 folds into the S1 motif domain; the sequence is GDNVIGKIVD…EVNNIDLTTK (73 aa). The KH domain occupies 147-205; that stretch reads KGGQIVKITPSRVPRVIGRGGSMINMIKKLTMTRIIVGQNGWIWVNGKNEALEKLAIEA. Residues 241-254 show a composition bias toward acidic residues; the sequence is EIPELEEEPQEETE. The disordered stretch occupies residues 241 to 265; that stretch reads EIPELEEEPQEETEVNNNDGETRRT.

The protein belongs to the RRP4 family. Component of the archaeal exosome complex. Forms a trimer of Rrp4 and/or Csl4 subunits. The trimer associates with a hexameric ring-like arrangement composed of 3 Rrp41-Rrp42 heterodimers.

It is found in the cytoplasm. Functionally, non-catalytic component of the exosome, which is a complex involved in RNA degradation. Increases the RNA binding and the efficiency of RNA degradation. Confers strong poly(A) specificity to the exosome. This chain is Exosome complex component Rrp4, found in Pyrococcus horikoshii (strain ATCC 700860 / DSM 12428 / JCM 9974 / NBRC 100139 / OT-3).